The chain runs to 447 residues: tRNA-2-methylthio-N(6)-dimethylallyladenosine synthase (447 aa).

The MTTase N-terminal domain occupies 14-130; the sequence is KKVYIRTFGC…LPAMIANAGQ (117 aa). 6 residues coordinate [4Fe-4S] cluster: cysteine 23, cysteine 59, cysteine 93, cysteine 166, cysteine 170, and cysteine 173. In terms of domain architecture, Radical SAM core spans 152–382; the sequence is RSGTISAFIP…IALQGSISGE (231 aa). Positions 385 to 447 constitute a TRAM domain; sequence AAEVGAVVEV…TPATLIGTPA (63 aa).

This sequence belongs to the methylthiotransferase family. MiaB subfamily. In terms of assembly, monomer. [4Fe-4S] cluster serves as cofactor.

The protein localises to the cytoplasm. It carries out the reaction N(6)-dimethylallyladenosine(37) in tRNA + (sulfur carrier)-SH + AH2 + 2 S-adenosyl-L-methionine = 2-methylsulfanyl-N(6)-dimethylallyladenosine(37) in tRNA + (sulfur carrier)-H + 5'-deoxyadenosine + L-methionine + A + S-adenosyl-L-homocysteine + 2 H(+). Functionally, catalyzes the methylthiolation of N6-(dimethylallyl)adenosine (i(6)A), leading to the formation of 2-methylthio-N6-(dimethylallyl)adenosine (ms(2)i(6)A) at position 37 in tRNAs that read codons beginning with uridine. The chain is tRNA-2-methylthio-N(6)-dimethylallyladenosine synthase from Chlorobium phaeobacteroides (strain BS1).